The sequence spans 119 residues: Putative yippee-like protein Os10g0369500 (119 aa).

Positions 21–118 (AVLKCRRCRV…LEKARMWKEA (98 aa)) constitute a Yippee domain. Zn(2+) contacts are provided by Cys25, Cys28, Cys81, and Cys84.

The protein belongs to the yippee family.

This is Putative yippee-like protein Os10g0369500 from Oryza sativa subsp. japonica (Rice).